A 280-amino-acid chain; its full sequence is UDP-3-O-acyl-N-acetylglucosamine deacetylase (280 aa).

H79, H237, and D241 together coordinate Zn(2+). H264 functions as the Proton donor in the catalytic mechanism.

It belongs to the LpxC family. Zn(2+) is required as a cofactor.

It catalyses the reaction a UDP-3-O-[(3R)-3-hydroxyacyl]-N-acetyl-alpha-D-glucosamine + H2O = a UDP-3-O-[(3R)-3-hydroxyacyl]-alpha-D-glucosamine + acetate. Its pathway is glycolipid biosynthesis; lipid IV(A) biosynthesis; lipid IV(A) from (3R)-3-hydroxytetradecanoyl-[acyl-carrier-protein] and UDP-N-acetyl-alpha-D-glucosamine: step 2/6. Its function is as follows. Catalyzes the hydrolysis of UDP-3-O-myristoyl-N-acetylglucosamine to form UDP-3-O-myristoylglucosamine and acetate, the committed step in lipid A biosynthesis. The chain is UDP-3-O-acyl-N-acetylglucosamine deacetylase from Chlamydia felis (strain Fe/C-56) (Chlamydophila felis).